A 571-amino-acid polypeptide reads, in one-letter code: uncharacterized protein (571 aa).

At 1–3 (MNS) the chain is on the cytoplasmic side. Residues 4–24 (LQILSFVGFTLLVAVITWWKV) form a helical membrane-spanning segment. At 25 to 74 (RKTDTGSQQGYFLAGRSLKAPVIAASLMLTNLSTEQLVGLSGQAYKSGMS) the chain is on the periplasmic side. The helical transmembrane segment at 75 to 95 (VMGWEVTSAVTLIFLALIFLP) threads the bilayer. Residues 96 to 118 (RYLKRGIATIPDFLEERYDKTTR) lie on the Cytoplasmic side of the membrane. Residues 119–139 (IIIDFCFLIATGVCFLPIVLY) traverse the membrane as a helical segment. Topologically, residues 140–162 (SGALALNSLFHVGESLQISHGAA) are periplasmic. Residues 163–183 (IWLLVILLGLAGILYAVIGGL) form a helical membrane-spanning segment. Residues 184–191 (RAMAVADS) are Cytoplasmic-facing. The chain crosses the membrane as a helical span at residues 192–212 (INGIGLVIGGLMVPVFGLIAM). Residues 213 to 240 (GKGSFMQGIEQLTTVHAEKLNSIGGPTD) are Periplasmic-facing. A helical membrane pass occupies residues 241 to 261 (PLPIGAAFTGLILVNTFYWCT). The Cytoplasmic segment spans residues 262-283 (NQGIVQRTLASKSLAEGQKGAL). The chain crosses the membrane as a helical span at residues 284–304 (LTAVLKMLDPLVLVLPGLIAF). Residues 305–324 (HLYQDLPKADMAYPTLVNNV) lie on the Periplasmic side of the membrane. A helical transmembrane segment spans residues 325–345 (LPVPMVGFFGAVLFGAVISTF). Topologically, residues 346–380 (NGFLNSASTLFSMGIYRRIINQNAEPQQLVTVGRK) are cytoplasmic. A helical membrane pass occupies residues 381-401 (FGFFIAIVSVLVAPWIANAPQ). Residues 402–415 (GLYSWMKQLNGIYN) are Periplasmic-facing. A helical transmembrane segment spans residues 416 to 436 (VPLVTIIIMGFFFPRIPALAA). Residue Lys-437 is a topological domain, cytoplasmic. A helical membrane pass occupies residues 438-458 (VAMGIGIISYITINYLVKFDF). The Periplasmic segment spans residues 459–460 (HF). A helical transmembrane segment spans residues 461–481 (LYVLACTFCINVVVMLVIGFI). The Cytoplasmic segment spans residues 482–505 (KPRATPFTFKDAFAVDMKPWKNVK). A helical transmembrane segment spans residues 506–526 (IASIGILFAMIGVYAGLAEFG). The Periplasmic segment spans residues 527–532 (GYGTRW). Residues 533–553 (LAMISYFIAAVVIVYLIFDSW) traverse the membrane as a helical segment. The Cytoplasmic segment spans residues 554–571 (RHRHDPAVTFTPDGKDSL).

Belongs to the sodium:solute symporter (SSF) (TC 2.A.21) family.

It localises to the cell inner membrane. This is an uncharacterized protein from Escherichia coli (strain K12).